Here is a 248-residue protein sequence, read N- to C-terminus: ATP synthase subunit a, chloroplastic (248 aa).

A run of 5 helical transmembrane segments spans residues 35-55, 94-114, 133-153, 202-222, and 224-244; these read GQVF…AIAG, IPYI…GALI, INTT…AGLS, VFTL…GLFA, and SIQA…ALEG.

The protein belongs to the ATPase A chain family. F-type ATPases have 2 components, CF(1) - the catalytic core - and CF(0) - the membrane proton channel. CF(1) has five subunits: alpha(3), beta(3), gamma(1), delta(1), epsilon(1). CF(0) has four main subunits: a, b, b' and c.

Its subcellular location is the plastid. The protein localises to the chloroplast thylakoid membrane. In terms of biological role, key component of the proton channel; it plays a direct role in the translocation of protons across the membrane. This chain is ATP synthase subunit a, chloroplastic, found in Antithamnion sp. (Red alga).